The chain runs to 236 residues: uncharacterized protein (236 aa).

The protein to M.tuberculosis Rv2557.

This is an uncharacterized protein from Mycobacterium tuberculosis (strain CDC 1551 / Oshkosh).